Here is a 545-residue protein sequence, read N- to C-terminus: Inosine-5'-monophosphate dehydrogenase (545 aa).

2 CBS domains span residues 138 to 194 (MITD…DYDT) and 201 to 258 (MTKE…PDAT). Residues D295 and 347 to 349 (GIG) contribute to the NAD(+) site. Positions 349 and 351 each coordinate K(+). S352 is an IMP binding site. C354 contributes to the K(+) binding site. The active-site Thioimidate intermediate is the C354. IMP contacts are provided by residues 387-389 (DGG), 410-411 (GG), and 434-438 (YRGMG). R455 acts as the Proton acceptor in catalysis. Residue E470 coordinates IMP. E524, S525, and H526 together coordinate K(+).

This sequence belongs to the IMPDH/GMPR family. Homotetramer. Requires K(+) as cofactor.

It catalyses the reaction IMP + NAD(+) + H2O = XMP + NADH + H(+). The protein operates within purine metabolism; XMP biosynthesis via de novo pathway; XMP from IMP: step 1/1. With respect to regulation, mycophenolic acid (MPA) is a non-competitive inhibitor that prevents formation of the closed enzyme conformation by binding to the same site as the amobile flap. In contrast, mizoribine monophosphate (MZP) is a competitive inhibitor that induces the closed conformation. MPA is a potent inhibitor of mammalian IMPDHs but a poor inhibitor of the bacterial enzymes. MZP is a more potent inhibitor of bacterial IMPDH. In terms of biological role, catalyzes the conversion of inosine 5'-phosphate (IMP) to xanthosine 5'-phosphate (XMP), the first committed and rate-limiting step in the de novo synthesis of guanine nucleotides, and therefore plays an important role in the regulation of cell growth. The protein is Inosine-5'-monophosphate dehydrogenase of Bifidobacterium longum (strain NCC 2705).